The chain runs to 953 residues: MEEHGHHEMEGTPLGCHSHIKLLKINREHLVTNIRNTQCLVDNLLENGYFSAEDAEIVCACPTKPDKVRKILDLVQSKGEEVSEFFLYVLQQLEDAYVDLRLWLSEIGFSPSQLIRTKTIVNTDPVSRYTQQLRHQLGRDSKFMLCYAQKEDLLLEETYMDTLMELVGFNNENLGSLGGLDCLLDHSTGVLNEHGETVFVFGDAGVGKSMLLQRLQSLWASGRLTSTAKFFFHFRCRMFSCFKESDMLSLQDLLFKHFCYPEQDPEEVFSFLLRFPHTALFTFDGLDELHSDFDLSRVPDSCCPWEPAHPLVLLANLLSGRLLKGAGKLLTARTGVEVPRQLLRKKVLLRGFSPSHLRAYARRMFPERTAQEHLLQQLDANPNLCSLCGVPLFCWIIFRCFQHFQTVFEGSSSQLPDCAVTLTDVFLLVTEVHLNRPQPSSLVQRNTRSPAETLRAGWRTLHALGEVAHRGTDKSLFVFGQEEVQASKLQEGDLQLGFLRALPDVGPEQGQSYEFFHLTLQAFFTAFFLVADDKVSTRELLRFFREWTSPGEATSSSCHSSFFSFQCLGGRSRLGPDPFRNKDHFQFTNLFLCGLLAKARQKLLRQLVPKAILRRKRKALWAHLFASLRSYLKSLPRVQSGGFNQVHAMPTFLWMLRCIYETQSQKVGRLAARGISADYLKLAFCNACSADCSALSFVLHHFHRQLALDLDNNNLNDYGVQELQPCFSRLTVIRLSVNQITDTGVKVLCEELTKYKIVTFLGLYNNQITDIGARYVAQILDECRGLKHLKLGKNRITSEGGKCVALAVKNSTSIVDVGMWGNQIGDEGAKAFAEALKDHPSLTTLSLAFNGISPEGGKSLAQALKQNTTLTVIWLTKNELNDESAECFAEMLRVNQTLRHLWLIQNRITAKGTAQLARALQKNTAITEICLNGNLIKPEEAKVFENEKRIICF.

Positions 15–107 (GCHSHIKLLK…VDLRLWLSEI (93 aa)) constitute a CARD domain. In terms of domain architecture, NACHT spans 196–531 (ETVFVFGDAG…AFFTAFFLVA (336 aa)). 202-209 (GDAGVGKS) contributes to the ATP binding site. Residues C558 and C567 are each lipidated (S-palmitoyl cysteine). 8 LRR repeats span residues 702 to 725 (FHRQ…ELQP), 727 to 750 (FSRL…VLCE), 755 to 778 (YKIV…YVAQ), 783 to 806 (CRGL…CVAL), 839 to 862 (HPSL…SLAQ), 867 to 890 (NTTL…CFAE), 895 to 918 (NQTL…QLAR), and 923 to 946 (NTAI…VFEN). C952 is lipidated: S-palmitoyl cysteine.

Belongs to the NOD1-NOD2 family. Homooligomer: homooligomerizes following ligand-binding, promoting RIPK2 recruitment. Interacts (via CARD domain) with RIPK2 (via CARD domain). Following RIPK2 recruitment, RIPK2 homooligomerizes via its CARD domain and forms long filaments named RIPosomes. Interacts (via CARD domain) with ubiquitin; inhibiting interaction with RIPK2. Interacts with ARHGEF2. Interacts with NLRP10 and recruits it to the cell membrane following invasive bacterial infection. Interacts with IFIH1; this interaction promotes transcription of antiviral genes and inhibition of viral replication. Interacts with Irgm1; promoting NOD1 degradation. Interacts with ATG16L1. Post-translationally, ubiquitinated. 'Lys-48'-linked polyubiquitination by RNF34 promotes proteasomal degradation and thereby negatively regulates NOD1 for instance in NF-kappa-B activation. In terms of processing, palmitoylated. Palmitoylation is required for proper recruitment to the bacterial entry site and hence for proper signaling upon cognate peptidoglycan detection. Degraded via selective autophagy following interaction with Irgm1. Irgm1 promotes NOD1-RIPK2 RIPosome recruitment to autophagosome membranes, promoting their SQSTM1/p62-dependent autophagic degradation. Although ubiquitously expressed, NOD1 levels are more abundant in immune cells, the gastrointestinal tract, and adipose tissue.

It localises to the cell membrane. The protein localises to the apical cell membrane. The protein resides in the basolateral cell membrane. It is found in the cytoplasm. Functionally, pattern recognition receptor (PRR) that detects bacterial peptidoglycan fragments and other danger signals and thus participates in both innate and adaptive immune responses. Specifically recognizes and binds gamma-D-glutamyl-meso-diaminopimelic acid (iE-DAP), a dipeptide present in peptidoglycan of Gram-negative bacteria. Preferentially binds iE-DAP in tetrapeptide-containing muropeptides (MurNAc-TetraDAP or TetraDAP). Ligand binding triggers oligomerization that facilitates the binding and subsequent activation of the proximal adapter receptor-interacting RIPK2. Following recruitment, RIPK2 undergoes 'Met-1'- (linear) and 'Lys-63'-linked polyubiquitination by E3 ubiquitin-protein ligases XIAP, BIRC2, BIRC3 and the LUBAC complex, becoming a scaffolding protein for downstream effectors, triggering activation of the NF-kappa-B and MAP kinases signaling. This in turn leads to the transcriptional activation of hundreds of genes involved in immune response. Also acts as a regulator of antiviral response elicited by dsRNA and the expression of RLR pathway members by targeting IFIH1 and TRAF3 to modulate the formation of IFIH1-MAVS and TRAF3-MAVS complexes leading to increased transcription of type I IFNs. Also acts as a regulator of autophagy via its interaction with ATG16L1, possibly by recruiting ATG16L1 at the site of bacterial entry. Besides recognizing pathogens, also involved in the endoplasmic reticulum stress response: acts by sensing and binding to the cytosolic metabolite sphingosine-1-phosphate generated in response to endoplasmic reticulum stress, initiating an inflammation process that leads to activation of the NF-kappa-B and MAP kinases signaling. In addition, plays a role in insulin trafficking in beta cells in a cell-autonomous manner. Mechanistically, upon recognizing cognate ligands, NOD1 and RIPK2 localize to insulin vesicles where they recruit RAB1A to direct insulin trafficking through the cytoplasm. The sequence is that of Nucleotide-binding oligomerization domain-containing protein 1 from Mus musculus (Mouse).